Here is a 352-residue protein sequence, read N- to C-terminus: Thiamine-phosphate synthase (352 aa).

The tract at residues M1 to G128 is unknown. A disordered region spans residues S63–D85. The interval L129–I352 is thiamine-phosphate synthase. 4-amino-2-methyl-5-(diphosphooxymethyl)pyrimidine is bound by residues Q180–K184 and N212. Mg(2+) is bound by residues D213 and D232. S251 and K280 together coordinate 4-amino-2-methyl-5-(diphosphooxymethyl)pyrimidine. G307 contributes to the 2-[(2R,5Z)-2-carboxy-4-methylthiazol-5(2H)-ylidene]ethyl phosphate binding site.

This sequence belongs to the thiamine-phosphate synthase family. It depends on Mg(2+) as a cofactor.

The catalysed reaction is 2-[(2R,5Z)-2-carboxy-4-methylthiazol-5(2H)-ylidene]ethyl phosphate + 4-amino-2-methyl-5-(diphosphooxymethyl)pyrimidine + 2 H(+) = thiamine phosphate + CO2 + diphosphate. It catalyses the reaction 2-(2-carboxy-4-methylthiazol-5-yl)ethyl phosphate + 4-amino-2-methyl-5-(diphosphooxymethyl)pyrimidine + 2 H(+) = thiamine phosphate + CO2 + diphosphate. The enzyme catalyses 4-methyl-5-(2-phosphooxyethyl)-thiazole + 4-amino-2-methyl-5-(diphosphooxymethyl)pyrimidine + H(+) = thiamine phosphate + diphosphate. The protein operates within cofactor biosynthesis; thiamine diphosphate biosynthesis; thiamine phosphate from 4-amino-2-methyl-5-diphosphomethylpyrimidine and 4-methyl-5-(2-phosphoethyl)-thiazole: step 1/1. Its function is as follows. Condenses 4-methyl-5-(beta-hydroxyethyl)thiazole monophosphate (THZ-P) and 2-methyl-4-amino-5-hydroxymethyl pyrimidine pyrophosphate (HMP-PP) to form thiamine monophosphate (TMP). This Synechococcus sp. (strain CC9605) protein is Thiamine-phosphate synthase.